The sequence spans 198 residues: Neutrophil gelatinase-associated lipocalin (198 aa).

The first 20 residues, M1–A20, serve as a signal peptide directing secretion. At Q21 the chain carries Pyrrolidone carboxylic acid. Y72–T74 serves as a coordination point for a carboxymycobactin. A glycan (N-linked (GlcNAc...) asparagine) is linked at N85. C96 and C195 are oxidised to a cystine. Residue Y126 participates in enterobactin binding. A carboxymycobactin contacts are provided by K145, K154, and Y158. K154 lines the enterobactin pocket.

The protein belongs to the calycin superfamily. Lipocalin family. As to quaternary structure, monomer. Homodimer; disulfide-linked. Heterodimer; disulfide-linked with MMP9. In terms of tissue distribution, detected in the ureteric bud in embryonic kidney (at protein level).

The protein resides in the secreted. Its subcellular location is the cytoplasmic granule lumen. It localises to the cytoplasmic vesicle lumen. Functionally, iron-trafficking protein involved in multiple processes such as apoptosis, innate immunity and renal development. Binds iron through association with 2,3-dihydroxybenzoic acid (2,3-DHBA), a siderophore that shares structural similarities with bacterial enterobactin, and delivers or removes iron from the cell, depending on the context. Iron-bound form (holo-24p3) is internalized following binding to the SLC22A17 (24p3R) receptor, leading to release of iron and subsequent increase of intracellular iron concentration. In contrast, association of the iron-free form (apo-24p3) with the SLC22A17 (24p3R) receptor is followed by association with an intracellular siderophore, iron chelation and iron transfer to the extracellular medium, thereby reducing intracellular iron concentration. Involved in apoptosis due to interleukin-3 (IL3) deprivation: iron-loaded form increases intracellular iron concentration without promoting apoptosis, while iron-free form decreases intracellular iron levels, inducing expression of the proapoptotic protein BCL2L11/BIM, resulting in apoptosis. Involved in innate immunity; limits bacterial proliferation by sequestering iron bound to microbial siderophores, such as enterobactin. Can also bind siderophores from M.tuberculosis. This chain is Neutrophil gelatinase-associated lipocalin (Lcn2), found in Rattus norvegicus (Rat).